A 190-amino-acid polypeptide reads, in one-letter code: dTTP/UTP pyrophosphatase (190 aa).

Catalysis depends on aspartate 71, which acts as the Proton acceptor.

This sequence belongs to the Maf family. YhdE subfamily. Requires a divalent metal cation as cofactor.

It localises to the cytoplasm. It catalyses the reaction dTTP + H2O = dTMP + diphosphate + H(+). It carries out the reaction UTP + H2O = UMP + diphosphate + H(+). Functionally, nucleoside triphosphate pyrophosphatase that hydrolyzes dTTP and UTP. May have a dual role in cell division arrest and in preventing the incorporation of modified nucleotides into cellular nucleic acids. This is dTTP/UTP pyrophosphatase from Xanthomonas oryzae pv. oryzae (strain MAFF 311018).